The primary structure comprises 447 residues: Alkylglycerol monooxygenase (447 aa).

2 helical membrane-spanning segments follow: residues 43-63 and 111-131; these read ATPF…ILKG and WDSP…YYWF. A Fatty acid hydroxylase domain is found at 118–249; the sequence is YLTFLGVDFG…LIIWDRIFGT (132 aa). A Histidine box-1 motif is present at residues 132 to 136; the sequence is HRMAH. The Histidine box-2 motif lies at 145 to 149; it reads HQAHH. Residues 170–190 form a helical membrane-spanning segment; that stretch reads SWVFYCPLALFVPPSVFAVHI. The Histidine box-3 signature appears at 221 to 225; the sequence is HRVHH. Transmembrane regions (helical) follow at residues 334–354, 363–383, and 413–433; these read FLKI…EETF, VTIL…GFLL, and IESL…FWGV.

The protein belongs to the sterol desaturase family. TMEM195 subfamily. It depends on Fe cation as a cofactor.

Its subcellular location is the endoplasmic reticulum membrane. It catalyses the reaction 1-O-(1,2-saturated-alkyl)-sn-glycerol + (6R)-L-erythro-5,6,7,8-tetrahydrobiopterin + O2 = a 1-(1-hydroxyalkyl)-sn-glycerol + (6R)-L-erythro-6,7-dihydrobiopterin + H2O. Functionally, glyceryl-ether monooxygenase that cleaves the O-alkyl bond of ether lipids. Ether lipids are essential components of brain membranes. The sequence is that of Alkylglycerol monooxygenase (Agmo) from Rattus norvegicus (Rat).